We begin with the raw amino-acid sequence, 845 residues long: MNEDSRLSSSQQPSTSTPRSSIPSTMNSDEPNTCRRLSQSQEQPSTSRTCKSETPEFGYSDSLPFAPWRRKRYGLNIQGLHEEIVDMYHWIKPNEIESRLRTKVFEKVRDSVLRRWKQKTIKISMFGSLRTNLFLPTSDIDVLVECDDWVGTPGDWLAETARGLEADNIAESVMVYGGAFVPIVKMVDRDTRLSIDISFNTVQGVRAASYIAKVKEEFPLIEPLVLLLKQFLHYRNLNQTFTGGLSSYGLVLLLVNFFQLYALNMRSRTIYDRGVNLGHLLLRFLELYSLEFNFEEMGISPGQCCYIPKSASGARYGHKQAQPGNLALEDPLLTANDVGRSTYNFSSIANAFGQAFQILLVAVTLRERKGKNHVAMRAYKGSLLHLIMPFTSKELTYRNWLMSGVLSMPGQEAPASYDLNQLHNTLVSPMVDLSRYAWLRKAPAKAEKRDSRPLTIVNPADDRQTLAQQLKKQILEQTEAKKSLEKMPACDDNKKEEELVATRETDVELEAEDTESEGHHNGENDLILTGPPLPTSTQSVNTSATVSTAASISEREDTDSPGLSSSMGNQSSEEDEDNGINNRNNSAVPVQFKKPFNEVVAQPARESKRTQTTSEDKMQDQFHFNGYSYPPPSRYAAGTAAPSHKHRNAHPQRQRPSIRNLSQGSDGSDEYNVESWNNNIRQGRRASSNSPSPSRQQTNTRNCGPTNNIPYDSFRSQNKNSTLDGSNNSSEEPITMYADVVKKKSSITTSTNTSTADVNVTNGNPIPANGIIPQSMAVVNVGRGSYRNALTTSPMTPPSAHTSMQKQHHLRKDNECGFDNNSATSSTDLSHHQPQLVPPVNRLQR.

The segment at 1–55 (MNEDSRLSSSQQPSTSTPRSSIPSTMNSDEPNTCRRLSQSQEQPSTSRTCKSETP) is disordered. Residues 7–25 (LSSSQQPSTSTPRSSIPST) are compositionally biased toward low complexity. Positions 26–49 (MNSDEPNTCRRLSQSQEQPSTSRT) are enriched in polar residues. The Mg(2+) site is built by Asp-139 and Asp-141. The region spanning 276 to 335 (NLGHLLLRFLELYSLEFNFEEMGISPGQCCYIPKSASGARYGHKQAQPGNLALEDPLLTA) is the PAP-associated domain. Over residues 482 to 506 (KSLEKMPACDDNKKEEELVATRETD) the composition is skewed to basic and acidic residues. Disordered regions lie at residues 482-733 (KSLE…SEEP) and 788-845 (NALT…RLQR). Over residues 535–551 (TSTQSVNTSATVSTAAS) the composition is skewed to low complexity. Composition is skewed to polar residues over residues 561–571 (PGLSSSMGNQS) and 579–588 (GINNRNNSAV). The span at 605–620 (RESKRTQTTSEDKMQD) shows a compositional bias: basic and acidic residues. Residues 643–653 (SHKHRNAHPQR) show a composition bias toward basic residues. 4 stretches are compositionally biased toward polar residues: residues 654–666 (QRPSIRNLSQGSD), 695–732 (RQQTNTRNCGPTNNIPYDSFRSQNKNSTLDGSNNSSEE), 788–805 (NALTTSPMTPPSAHTSMQ), and 819–828 (DNNSATSSTD).

As to quaternary structure, interacts with gls-1 isoform C. It depends on Mg(2+) as a cofactor. Mn(2+) serves as cofactor. In terms of tissue distribution, germline-specific.

It localises to the cytoplasm. The protein resides in the cytoplasmic granule. Its subcellular location is the perinuclear region. It carries out the reaction RNA(n) + ATP = RNA(n)-3'-adenine ribonucleotide + diphosphate. Its function is as follows. Cytoplasmic poly(A) RNA polymerase that adds successive AMP monomers to the 3'-end of specific RNAs, forming a poly(A) tail. The enzymatic activity is enhanced by its interaction with gls-1. Required, together with gld-2, for early meiotic progression in male and female germ cells and for gld-1 protein accumulation in the hermaphrodite germline. In the germline, forms a complex with gls-1 which directly binds to gld-1 mRNA and prevents its degradation. The chain is Poly(A) RNA polymerase gld-4 from Caenorhabditis elegans.